Reading from the N-terminus, the 435-residue chain is Glutamyl-tRNA reductase (435 aa).

Residues 50–53, serine 110, 115–117, and glutamine 121 contribute to the substrate site; these read TCNR and ETQ. Catalysis depends on cysteine 51, which acts as the Nucleophile. 189-194 is an NADP(+) binding site; it reads GAGEMS.

This sequence belongs to the glutamyl-tRNA reductase family. Homodimer.

It carries out the reaction (S)-4-amino-5-oxopentanoate + tRNA(Glu) + NADP(+) = L-glutamyl-tRNA(Glu) + NADPH + H(+). Its pathway is porphyrin-containing compound metabolism; protoporphyrin-IX biosynthesis; 5-aminolevulinate from L-glutamyl-tRNA(Glu): step 1/2. In terms of biological role, catalyzes the NADPH-dependent reduction of glutamyl-tRNA(Glu) to glutamate 1-semialdehyde (GSA). The polypeptide is Glutamyl-tRNA reductase (Campylobacter lari (strain RM2100 / D67 / ATCC BAA-1060)).